The following is a 155-amino-acid chain: S-ribosylhomocysteine lyase (155 aa).

Positions 54, 58, and 122 each coordinate Fe cation.

The protein belongs to the LuxS family. Homodimer. Fe cation serves as cofactor.

It catalyses the reaction S-(5-deoxy-D-ribos-5-yl)-L-homocysteine = (S)-4,5-dihydroxypentane-2,3-dione + L-homocysteine. In terms of biological role, involved in the synthesis of autoinducer 2 (AI-2) which is secreted by bacteria and is used to communicate both the cell density and the metabolic potential of the environment. The regulation of gene expression in response to changes in cell density is called quorum sensing. Catalyzes the transformation of S-ribosylhomocysteine (RHC) to homocysteine (HC) and 4,5-dihydroxy-2,3-pentadione (DPD). In Deinococcus geothermalis (strain DSM 11300 / CIP 105573 / AG-3a), this protein is S-ribosylhomocysteine lyase.